Here is an 842-residue protein sequence, read N- to C-terminus: Elongation factor 2 (842 aa).

One can recognise a tr-type G domain in the interval 17–253; sequence TNVRNMSVIA…LWGDSYFNPK (237 aa). Residues 26–33, 158–161, and 213–215 contribute to the GTP site; these read AHVDHGKS, NKVD, and SGL. The residue at position 699 (His-699) is a Diphthamide.

It belongs to the TRAFAC class translation factor GTPase superfamily. Classic translation factor GTPase family. EF-G/EF-2 subfamily.

It localises to the cytoplasm. It catalyses the reaction GTP + H2O = GDP + phosphate + H(+). Functionally, catalyzes the GTP-dependent ribosomal translocation step during translation elongation. During this step, the ribosome changes from the pre-translocational (PRE) to the post-translocational (POST) state as the newly formed A-site-bound peptidyl-tRNA and P-site-bound deacylated tRNA move to the P and E sites, respectively. Catalyzes the coordinated movement of the two tRNA molecules, the mRNA and conformational changes in the ribosome. The polypeptide is Elongation factor 2 (EFT1) (Debaryomyces hansenii (strain ATCC 36239 / CBS 767 / BCRC 21394 / JCM 1990 / NBRC 0083 / IGC 2968) (Yeast)).